A 409-amino-acid chain; its full sequence is N-acetylglucosamine-6-phosphate deacetylase (409 aa).

Glutamate 143 serves as a coordination point for a divalent metal cation. Position 154 to 155 (154 to 155 (AH)) interacts with substrate. A divalent metal cation-binding residues include histidine 211 and histidine 232. Residues 235-236 (NA), arginine 243, and 269-272 (DGTH) contribute to the substrate site. Catalysis depends on aspartate 294, which acts as the Proton donor/acceptor. A substrate-binding site is contributed by 328 to 330 (LSG).

Belongs to the metallo-dependent hydrolases superfamily. NagA family. A divalent metal cation is required as a cofactor.

The enzyme catalyses N-acetyl-D-glucosamine 6-phosphate + H2O = D-glucosamine 6-phosphate + acetate. It participates in amino-sugar metabolism; N-acetylneuraminate degradation. Its function is as follows. Hydrolyzes the N-glycolyl group from N-glycolylglucosamine 6-phosphate (GlcNGc-6-P) in the N-glycolylneuraminic acid (Neu5Gc) degradation pathway. Although human is not able to catalyze formation of Neu5Gc due to the inactive CMAHP enzyme, Neu5Gc is present in food and must be degraded. This chain is N-acetylglucosamine-6-phosphate deacetylase (AMDHD2), found in Homo sapiens (Human).